Consider the following 357-residue polypeptide: Dihydroorotate dehydrogenase (quinone) (357 aa).

Residues 66 to 70 (AGFDK) and threonine 90 each bind FMN. Lysine 70 serves as a coordination point for substrate. 115-119 (NRMGF) is a substrate binding site. The FMN site is built by asparagine 143 and asparagine 176. A substrate-binding site is contributed by asparagine 176. Serine 179 acts as the Nucleophile in catalysis. Asparagine 181 serves as a coordination point for substrate. Residues lysine 212 and threonine 240 each coordinate FMN. A substrate-binding site is contributed by 241–242 (NT). Residues glycine 264, glycine 293, and 314-315 (YT) each bind FMN.

The protein belongs to the dihydroorotate dehydrogenase family. Type 2 subfamily. As to quaternary structure, monomer. The cofactor is FMN.

Its subcellular location is the cell membrane. The catalysed reaction is (S)-dihydroorotate + a quinone = orotate + a quinol. It participates in pyrimidine metabolism; UMP biosynthesis via de novo pathway; orotate from (S)-dihydroorotate (quinone route): step 1/1. Functionally, catalyzes the conversion of dihydroorotate to orotate with quinone as electron acceptor. This Mycobacterium bovis (strain BCG / Pasteur 1173P2) protein is Dihydroorotate dehydrogenase (quinone).